A 278-amino-acid chain; its full sequence is Dermonecrotic toxin LspiSicTox-betaIE2i (278 aa).

His5 is an active-site residue. 2 residues coordinate Mg(2+): Glu25 and Asp27. The active-site Nucleophile is His41. Cystine bridges form between Cys45/Cys51 and Cys47/Cys190. Glu85 provides a ligand contact to Mg(2+).

This sequence belongs to the arthropod phospholipase D family. Class II subfamily. It depends on Mg(2+) as a cofactor. In terms of tissue distribution, expressed by the venom gland.

Its subcellular location is the secreted. It catalyses the reaction an N-(acyl)-sphingosylphosphocholine = an N-(acyl)-sphingosyl-1,3-cyclic phosphate + choline. It carries out the reaction an N-(acyl)-sphingosylphosphoethanolamine = an N-(acyl)-sphingosyl-1,3-cyclic phosphate + ethanolamine. The enzyme catalyses a 1-acyl-sn-glycero-3-phosphocholine = a 1-acyl-sn-glycero-2,3-cyclic phosphate + choline. The catalysed reaction is a 1-acyl-sn-glycero-3-phosphoethanolamine = a 1-acyl-sn-glycero-2,3-cyclic phosphate + ethanolamine. Its function is as follows. Dermonecrotic toxins cleave the phosphodiester linkage between the phosphate and headgroup of certain phospholipids (sphingolipid and lysolipid substrates), forming an alcohol (often choline) and a cyclic phosphate. This toxin acts on sphingomyelin (SM). It may also act on ceramide phosphoethanolamine (CPE), lysophosphatidylcholine (LPC) and lysophosphatidylethanolamine (LPE), but not on lysophosphatidylserine (LPS), and lysophosphatidylglycerol (LPG). It acts by transphosphatidylation, releasing exclusively cyclic phosphate products as second products. Induces dermonecrosis, hemolysis, increased vascular permeability, edema, inflammatory response, and platelet aggregation. The sequence is that of Dermonecrotic toxin LspiSicTox-betaIE2i from Loxosceles spinulosa (Recluse spider).